We begin with the raw amino-acid sequence, 295 residues long: UDP-N-acetylenolpyruvoylglucosamine reductase (295 aa).

The FAD-binding PCMH-type domain occupies 23 to 188; that stretch reads QVGGPADFLA…ISAKFALKPG (166 aa). Arg167 is an active-site residue. The Proton donor role is filled by Ser217. Glu287 is a catalytic residue.

This sequence belongs to the MurB family. Requires FAD as cofactor.

It is found in the cytoplasm. The catalysed reaction is UDP-N-acetyl-alpha-D-muramate + NADP(+) = UDP-N-acetyl-3-O-(1-carboxyvinyl)-alpha-D-glucosamine + NADPH + H(+). It functions in the pathway cell wall biogenesis; peptidoglycan biosynthesis. In terms of biological role, cell wall formation. This chain is UDP-N-acetylenolpyruvoylglucosamine reductase, found in Streptococcus equi subsp. zooepidemicus (strain H70).